The chain runs to 256 residues: Protein Ta0487 (256 aa).

It belongs to the CinA family.

This chain is Protein Ta0487, found in Thermoplasma acidophilum (strain ATCC 25905 / DSM 1728 / JCM 9062 / NBRC 15155 / AMRC-C165).